We begin with the raw amino-acid sequence, 129 residues long: Cytochrome c oxidase subunit 13, mitochondrial (129 aa).

The N-terminal 9 residues, 1 to 9 (MFRQCAKRY), are a transit peptide targeting the mitochondrion. At 10-43 (ASSLPPNALKPAFGPPDKVAAQKFKESLMATEKH) the chain is on the mitochondrial matrix side. The chain crosses the membrane as a helical span at residues 44-71 (AKDTSNMWVKISVWVALPAIALTAVNTY). The Mitochondrial intermembrane portion of the chain corresponds to 72–129 (FVEKEHAEHREHLKHVPDSEWPRDYEFMNIRSKPFFWGDGDKTLFWNPVVNRHIEHDD).

The protein belongs to the cytochrome c oxidase subunit 6A family. In terms of assembly, component of the cytochrome c oxidase (complex IV, CIV), a multisubunit enzyme composed of 12 subunits. The complex is composed of a catalytic core of 3 subunits COX1, COX2 and COX3, encoded in the mitochondrial DNA, and 9 supernumerary subunits COX4, COX5A (or COX5B), COX6, COX7, COX8, COX9, COX12, COX13 and COX26, which are encoded in the nuclear genome. The complex exists as a monomer or a dimer and forms supercomplexes (SCs) in the inner mitochondrial membrane with a dimer of ubiquinol-cytochrome c oxidoreductase (cytochrome b-c1 complex, complex III, CIII), resulting in 2 different assemblies (supercomplexes III(2)IV and III(2)IV(2)). COX13 interacts with COX1 and COX3 on the intermembrane space (IMS) and COX4 on the matrix side.

It is found in the mitochondrion inner membrane. It participates in energy metabolism; oxidative phosphorylation. Functionally, component of the cytochrome c oxidase, the last enzyme in the mitochondrial electron transport chain which drives oxidative phosphorylation. The respiratory chain contains 3 multisubunit complexes succinate dehydrogenase (complex II, CII), ubiquinol-cytochrome c oxidoreductase (cytochrome b-c1 complex, complex III, CIII) and cytochrome c oxidase (complex IV, CIV), that cooperate to transfer electrons derived from NADH and succinate to molecular oxygen, creating an electrochemical gradient over the inner membrane that drives transmembrane transport and the ATP synthase. Cytochrome c oxidase is the component of the respiratory chain that catalyzes the reduction of oxygen to water. Electrons originating from reduced cytochrome c in the intermembrane space (IMS) are transferred via the dinuclear copper A center (CU(A)) of COX2 and heme A of COX1 to the active site in COX1, a binuclear center (BNC) formed by heme A3 and copper B (CU(B)). The BNC reduces molecular oxygen to 2 water molecules using 4 electrons from cytochrome c in the IMS and 4 protons from the mitochondrial matrix. This chain is Cytochrome c oxidase subunit 13, mitochondrial (COX13), found in Saccharomyces cerevisiae (strain ATCC 204508 / S288c) (Baker's yeast).